Consider the following 147-residue polypeptide: MKKVSIYTDGACSGNPGDGGWGAILIYGNHEKEVSGFEKDTTNNRMELVAAINALKMLKEPCEVDLYSDSAYLVNGFLQNWVEKWKKNGWKTSNKEEVKNMELWQELDRLSNIHKIRWIKVKGHSDNEYNNRCDKLATDEIKKNSKK.

In terms of domain architecture, RNase H type-1 spans 1–142 (MKKVSIYTDG…CDKLATDEIK (142 aa)). Mg(2+) is bound by residues aspartate 9, glutamate 47, aspartate 69, and aspartate 134.

The protein belongs to the RNase H family. Monomer. Requires Mg(2+) as cofactor.

The protein resides in the cytoplasm. It catalyses the reaction Endonucleolytic cleavage to 5'-phosphomonoester.. Functionally, endonuclease that specifically degrades the RNA of RNA-DNA hybrids. This chain is Ribonuclease H, found in Acetivibrio thermocellus (strain ATCC 27405 / DSM 1237 / JCM 9322 / NBRC 103400 / NCIMB 10682 / NRRL B-4536 / VPI 7372) (Clostridium thermocellum).